Consider the following 395-residue polypeptide: Selection and upkeep of intraepithelial T-cells protein 7 (395 aa).

The N-terminal stretch at 1–25 (MMKPEFFCFSGFCVYFLFLQVVVSS) is a signal peptide. The Ig-like V-type domain occupies 26-141 (EKLRVTTPTR…DAAIMNLNVT (116 aa)). The Extracellular portion of the chain corresponds to 26–248 (EKLRVTTPTR…FNRDRIWMES (223 aa)). The cysteines at positions 49 and 123 are disulfide-linked. 2 N-linked (GlcNAc...) asparagine glycosylation sites follow: N92 and N139. The region spanning 142-233 (AVGLETEIHV…TGEEKQTSII (92 aa)) is the Ig-like C1-type domain. A disulfide bond links C163 and C217. A helical membrane pass occupies residues 249-269 (LASIVWIMLSVYILYIICFYW). Topologically, residues 270–287 (RTGCASGCLSKCFCVVTS) are cytoplasmic. A helical membrane pass occupies residues 288 to 308 (WPVQIVHLLFCTGTFFAIYLP). Topologically, residues 309–329 (HRSRVSLSDPQFPLYNNWITE) are extracellular. A helical membrane pass occupies residues 330-350 (LLFVILFLTICFALPIILLFI). At 351 to 395 (QFQFTSLTKWEKNKDGIMDQPRLGKAHETSSLYRKKTGKSWEQEK) the chain is on the cytoplasmic side. Residues 371–395 (PRLGKAHETSSLYRKKTGKSWEQEK) form a disordered region.

Belongs to the SKINT family. In terms of tissue distribution, expressed in skin, thymus, testis and, to a lower extent, bladder.

The protein localises to the membrane. In terms of biological role, may act by engaging a cell surface molecule on immature T-cells in the embryonic thymus. The protein is Selection and upkeep of intraepithelial T-cells protein 7 (Skint7) of Mus musculus (Mouse).